Reading from the N-terminus, the 357-residue chain is Mannonate dehydratase (357 aa).

This sequence belongs to the mannonate dehydratase family. The cofactor is Fe(2+). It depends on Mn(2+) as a cofactor.

The catalysed reaction is D-mannonate = 2-dehydro-3-deoxy-D-gluconate + H2O. Its pathway is carbohydrate metabolism; pentose and glucuronate interconversion. Functionally, catalyzes the dehydration of D-mannonate. The chain is Mannonate dehydratase from Sorangium cellulosum (strain So ce56) (Polyangium cellulosum (strain So ce56)).